A 434-amino-acid chain; its full sequence is 26S proteasome regulatory subunit 6A (434 aa).

The residue at position 2 (A2) is an N-acetylalanine. Y180 carries the post-translational modification Phosphotyrosine. 222–229 contacts ATP; sequence GPPGTGKT.

It belongs to the AAA ATPase family. Post-translationally, N-acetylated by NAT1.

It localises to the cytoplasm. The protein resides in the nucleus. In terms of biological role, the 26S proteasome is involved in the ATP-dependent degradation of ubiquitinated proteins. The regulatory (or ATPase) complex confers ATP dependency and substrate specificity to the 26S complex. This Saccharomyces cerevisiae (strain ATCC 204508 / S288c) (Baker's yeast) protein is 26S proteasome regulatory subunit 6A (RPT5).